The chain runs to 490 residues: Gallate decarboxylase (490 aa).

Aspartate 165 contributes to the Mn(2+) binding site. Residues 168 to 170 (IHR) and glycine 187 contribute to the prenylated FMN site. Residue glutamate 233 coordinates Mn(2+). The active-site Proton acceptor is glutamate 289.

It belongs to the UbiD family. Prenylated FMN serves as cofactor. It depends on Mn(2+) as a cofactor.

It carries out the reaction 3,4,5-trihydroxybenzoate + H(+) = 1,2,3-trihydroxybenzene + CO2. The enzyme catalyses 3,4-dihydroxybenzoate + H(+) = catechol + CO2. Involved in tannin degradation. Catalyzes the decarboxylation of gallic acid and protocatechuic acid to pyrogallol and catechol, respectively. The protein is Gallate decarboxylase of Lactiplantibacillus plantarum (strain ATCC BAA-793 / NCIMB 8826 / WCFS1) (Lactobacillus plantarum).